Consider the following 548-residue polypeptide: Folylpolyglutamate synthase (548 aa).

130-133 is a binding site for ATP; it reads GKGS. Mg(2+) contacts are provided by S157, E234, and H262. ATP is bound by residues R382 and D396.

The protein belongs to the folylpolyglutamate synthase family. Requires a monovalent cation as cofactor.

It is found in the mitochondrion inner membrane. The protein resides in the mitochondrion matrix. Its subcellular location is the cytoplasm. It carries out the reaction (6S)-5,6,7,8-tetrahydrofolyl-(gamma-L-Glu)(n) + L-glutamate + ATP = (6S)-5,6,7,8-tetrahydrofolyl-(gamma-L-Glu)(n+1) + ADP + phosphate + H(+). It participates in cofactor biosynthesis; tetrahydrofolylpolyglutamate biosynthesis. In terms of biological role, catalyzes conversion of folates to polyglutamate derivatives allowing concentration of folate compounds in the cell and the intracellular retention of these cofactors, which are important substrates for most of the folate-dependent enzymes that are involved in one-carbon transfer reactions involved in purine, pyrimidine and amino acid synthesis. Required for methionine synthesis and maintenance of intact mitochondrial DNA. Involved in telomere maintenance. This Saccharomyces cerevisiae (strain AWRI796) (Baker's yeast) protein is Folylpolyglutamate synthase.